The chain runs to 396 residues: NADH-quinone oxidoreductase subunit D (396 aa).

Belongs to the complex I 49 kDa subunit family. NDH-1 is composed of 14 different subunits. Subunits NuoB, C, D, E, F, and G constitute the peripheral sector of the complex.

The protein resides in the cell inner membrane. The catalysed reaction is a quinone + NADH + 5 H(+)(in) = a quinol + NAD(+) + 4 H(+)(out). Functionally, NDH-1 shuttles electrons from NADH, via FMN and iron-sulfur (Fe-S) centers, to quinones in the respiratory chain. The immediate electron acceptor for the enzyme in this species is believed to be ubiquinone. Couples the redox reaction to proton translocation (for every two electrons transferred, four hydrogen ions are translocated across the cytoplasmic membrane), and thus conserves the redox energy in a proton gradient. In Brucella anthropi (strain ATCC 49188 / DSM 6882 / CCUG 24695 / JCM 21032 / LMG 3331 / NBRC 15819 / NCTC 12168 / Alc 37) (Ochrobactrum anthropi), this protein is NADH-quinone oxidoreductase subunit D.